The sequence spans 227 residues: Gamma-glutamyl-hercynylcysteine sulfoxide hydrolase (227 aa).

Catalysis depends on cysteine 2, which acts as the Nucleophile. In terms of domain architecture, Glutamine amidotransferase type-2 spans 2 to 227 (CRHVAWLGAP…RDAHVVVTPL (226 aa)).

The enzyme catalyses gamma-L-glutamyl-hercynylcysteine S-oxide + H2O = S-(hercyn-2-yl)-L-cysteine S-oxide + L-glutamate. The protein operates within amino-acid biosynthesis; ergothioneine biosynthesis. In terms of biological role, catalyzes the hydrolysis of the gamma-glutamyl amide bond of hercynyl-gamma-L-glutamyl-L-cysteine sulfoxide to produce hercynylcysteine sulfoxide, a step in the biosynthesis pathway of ergothioneine. The chain is Gamma-glutamyl-hercynylcysteine sulfoxide hydrolase from Mycolicibacterium smegmatis (strain ATCC 700084 / mc(2)155) (Mycobacterium smegmatis).